We begin with the raw amino-acid sequence, 281 residues long: Small ribosomal subunit protein uS3 (281 aa).

The KH type-2 domain occupies 38 to 106; the sequence is IRRLLSTGLE…QVQLNILEVK (69 aa). The disordered stretch occupies residues 218-281; sequence APAGAERARR…VTHEPQIAES (64 aa). The segment covering 238 to 256 has biased composition (low complexity); the sequence is SGAAGTTVTGTDAGRAVGG.

The protein belongs to the universal ribosomal protein uS3 family. In terms of assembly, part of the 30S ribosomal subunit. Forms a tight complex with proteins S10 and S14.

Functionally, binds the lower part of the 30S subunit head. Binds mRNA in the 70S ribosome, positioning it for translation. This Mycobacterium leprae (strain Br4923) protein is Small ribosomal subunit protein uS3.